A 229-amino-acid polypeptide reads, in one-letter code: Protein MC132 (229 aa).

In terms of assembly, interacts with host RELA (via RHD domain), ELOB, ELOC and CUL5; these interactions induce the proteasomal degradation of host RELA.

It is found in the host cytoplasm. Inhibits host NF-kappa-B activation stimulated by IL-1 and multiple PRR viral detection pathways. Targets host NF-kappa-B component RELA/p65 for ubiquitin-dependent proteasomal degradation. The polypeptide is Protein MC132 (MC132) (Homo sapiens (Human)).